Consider the following 191-residue polypeptide: MKKELLEWIISIAVAFVILFIVGKFIVTPYTIKGESMDPTLKDGERVAVNIIGYKTGGLEKGNVVVFHANKNDDYVKRVIGVPGDKVEYKNDTLYVNGKKQDEPYLNYNLKHKQGDYITGTFQVKDLPNANPKSNVIPKGKYLVLGDNREVSKDSRAFGLIDEDQIVGKVSFRFWPFSEFKHNFNPENTKN.

Residues 1–7 (MKKELLE) lie on the Cytoplasmic side of the membrane. A helical transmembrane segment spans residues 8–28 (WIISIAVAFVILFIVGKFIVT). Topologically, residues 29 to 191 (PYTIKGESMD…HNFNPENTKN (163 aa)) are extracellular. Active-site residues include S36 and K77.

This sequence belongs to the peptidase S26 family.

It localises to the cell membrane. The enzyme catalyses Cleavage of hydrophobic, N-terminal signal or leader sequences from secreted and periplasmic proteins.. In terms of biological role, essential for cell viability. This Staphylococcus aureus (strain Mu50 / ATCC 700699) protein is Signal peptidase IB (spsB).